Reading from the N-terminus, the 219-residue chain is Antigen 5 like allergen Cul n 1 (219 aa).

The first 19 residues, M1 to S19, serve as a signal peptide directing secretion. 3 disulfides stabilise this stretch: C23-C45, C28-C124, and C55-C117. The 139-residue stretch at L73–W211 folds into the SCP domain.

The protein belongs to the CRISP family. Expressed in salivary glands.

The protein localises to the secreted. The protein is Antigen 5 like allergen Cul n 1 of Culicoides nubeculosus (Biting midge).